A 705-amino-acid chain; its full sequence is Polyribonucleotide nucleotidyltransferase (705 aa).

Residues Asp-486 and Asp-492 each coordinate Mg(2+). The region spanning 553–612 (PRIHTIRINPDKIKDVIGKGGSVIRALTEETGTTIEIEDDGTVKIAATDGEKAKFAIRRI) is the KH domain. An S1 motif domain is found at 622-690 (GRIYQGKVTR…RQGRVRLSIK (69 aa)).

This sequence belongs to the polyribonucleotide nucleotidyltransferase family. As to quaternary structure, component of the RNA degradosome, which is a multiprotein complex involved in RNA processing and mRNA degradation. Mg(2+) is required as a cofactor.

The protein localises to the cytoplasm. It catalyses the reaction RNA(n+1) + phosphate = RNA(n) + a ribonucleoside 5'-diphosphate. Functionally, involved in mRNA degradation. Catalyzes the phosphorolysis of single-stranded polyribonucleotides processively in the 3'- to 5'-direction. The chain is Polyribonucleotide nucleotidyltransferase from Serratia proteamaculans (strain 568).